The chain runs to 515 residues: Sugar transport protein MST4 (515 aa).

Over 1–17 (MAGGFSVSGSGVEFEAK) the chain is Cytoplasmic. Residues 18 to 38 (ITPIVIISCIMAATGGLMFGY) traverse the membrane as a helical segment. At 39-78 (DVGISGGVTSMDDFLREFFPTVLKKKHEDKESNYCKYDNQ) the chain is on the extracellular side. The helical transmembrane segment at 79 to 99 (GLQLFTSSLYLAGLTATFFAS) threads the bilayer. Residues 100-108 (YTTRRLGRR) lie on the Cytoplasmic side of the membrane. A helical membrane pass occupies residues 109 to 129 (LTMLIAGVFFIVGVIFNGAAQ). Residues 130 to 138 (NLAMLIVGR) lie on the Extracellular side of the membrane. Residues 139-159 (ILLGCGVGFANQAVPLFLSEI) traverse the membrane as a helical segment. The Cytoplasmic portion of the chain corresponds to 160 to 165 (APTRIR). Residues 166–186 (GGLNILFQLNVTIGILFANLV) form a helical membrane-spanning segment. The Extracellular portion of the chain corresponds to 187–199 (NYGTAKIHPWGWR). A helical membrane pass occupies residues 200 to 220 (LSLSLAGIPAALLTLGALFVV). The Cytoplasmic portion of the chain corresponds to 221–280 (DTPNSLIERGRLEEGKAVLRKIRGTDNVEPEFNEIVEASRVAQEVKHPFRNLLQRRNRPQ). The helical transmembrane segment at 281 to 301 (LVIAVLLQIFQQFTGINAIMF) threads the bilayer. Topologically, residues 302-315 (YAPVLFNTLGFKTD) are extracellular. The helical transmembrane segment at 316-336 (ASLYSAVITGAVNVLSTLVSV) threads the bilayer. The Cytoplasmic portion of the chain corresponds to 337 to 347 (YSVDRVGRRML). Residues 348–368 (LLEAGVQMFLSQVAIAVVLGI) form a helical membrane-spanning segment. Over 369-379 (KVTDRSDNLGH) the chain is Extracellular. A helical membrane pass occupies residues 380–400 (GWAIMVVVMVCTFVSSFAWSW). At 401–422 (GPLGWLIPSETFPLETRSAGQS) the chain is on the cytoplasmic side. The chain crosses the membrane as a helical span at residues 423–443 (VTVCVNLLFTFVIAQAFLSML). Residues 444–448 (CHLKY) are Extracellular-facing. The chain crosses the membrane as a helical span at residues 449–469 (AIFAFFSAWVVVMSLFVLFFL). Topologically, residues 470-515 (PETKNIPIEEMTERVWKQHWFWKRFMDDADKHHVVPNGGKSNGATV) are cytoplasmic.

The protein belongs to the major facilitator superfamily. Sugar transporter (TC 2.A.1.1) family. As to expression, expressed in roots, shoots, leaf blades, leaf sheaths, anthers, ovaries and embryos.

It is found in the membrane. Its function is as follows. Mediates active uptake of hexoses by sugar:proton symport. Can transport glucose, fructose, mannose and galactose. Can transport xylose and ribose. This Oryza sativa subsp. japonica (Rice) protein is Sugar transport protein MST4.